Reading from the N-terminus, the 278-residue chain is Protoheme IX farnesyltransferase 1 (278 aa).

Helical transmembrane passes span 12-32, 35-55, 76-96, 98-118, 129-149, 158-178, 199-221, 226-248, and 255-275; these read VIWL…GGVD, LFSL…FNHY, LITP…GISL, FLLL…FYAV, WLNI…GYAL, AVLI…ALAF, ERAV…WLYL, GAGG…YAAV, and MWKM…ALIL.

It belongs to the UbiA prenyltransferase family. Protoheme IX farnesyltransferase subfamily.

The protein resides in the cell membrane. The enzyme catalyses heme b + (2E,6E)-farnesyl diphosphate + H2O = Fe(II)-heme o + diphosphate. The protein operates within porphyrin-containing compound metabolism; heme O biosynthesis; heme O from protoheme: step 1/1. Its function is as follows. Converts heme B (protoheme IX) to heme O by substitution of the vinyl group on carbon 2 of heme B porphyrin ring with a hydroxyethyl farnesyl side group. This chain is Protoheme IX farnesyltransferase 1, found in Pyrobaculum aerophilum (strain ATCC 51768 / DSM 7523 / JCM 9630 / CIP 104966 / NBRC 100827 / IM2).